Reading from the N-terminus, the 555-residue chain is Chaperonin GroEL (555 aa).

Residues 29-32 (TLGP), lysine 50, 86-90 (DGTTT), glycine 418, and aspartate 499 contribute to the ATP site. The disordered stretch occupies residues 528 to 555 (HEEDNNTGNRSGGGVGGGHHGGMGGMDF). Positions 537–555 (RSGGGVGGGHHGGMGGMDF) are enriched in gly residues.

This sequence belongs to the chaperonin (HSP60) family. Forms a cylinder of 14 subunits composed of two heptameric rings stacked back-to-back. Interacts with the co-chaperonin GroES.

It is found in the cytoplasm. It carries out the reaction ATP + H2O + a folded polypeptide = ADP + phosphate + an unfolded polypeptide.. Its function is as follows. Together with its co-chaperonin GroES, plays an essential role in assisting protein folding. The GroEL-GroES system forms a nano-cage that allows encapsulation of the non-native substrate proteins and provides a physical environment optimized to promote and accelerate protein folding. This Orientia tsutsugamushi (strain Ikeda) (Rickettsia tsutsugamushi) protein is Chaperonin GroEL.